Here is a 226-residue protein sequence, read N- to C-terminus: Large ribosomal subunit protein uL3 (226 aa).

The segment covering 135-150 has biased composition (polar residues); sequence MSSQRASHGNSRSHNV. The segment at 135–158 is disordered; sequence MSSQRASHGNSRSHNVPGSIGMAQ. At Gln-158 the chain carries N5-methylglutamine.

It belongs to the universal ribosomal protein uL3 family. Part of the 50S ribosomal subunit. Forms a cluster with proteins L14 and L19. Post-translationally, methylated by PrmB.

Functionally, one of the primary rRNA binding proteins, it binds directly near the 3'-end of the 23S rRNA, where it nucleates assembly of the 50S subunit. The sequence is that of Large ribosomal subunit protein uL3 from Variovorax paradoxus (strain S110).